Consider the following 124-residue polypeptide: Large ribosomal subunit protein bL12 (124 aa).

It belongs to the bacterial ribosomal protein bL12 family. As to quaternary structure, homodimer. Part of the ribosomal stalk of the 50S ribosomal subunit. Forms a multimeric L10(L12)X complex, where L10 forms an elongated spine to which 2 to 4 L12 dimers bind in a sequential fashion. Binds GTP-bound translation factors.

Its function is as follows. Forms part of the ribosomal stalk which helps the ribosome interact with GTP-bound translation factors. Is thus essential for accurate translation. This is Large ribosomal subunit protein bL12 from Vesicomyosocius okutanii subsp. Calyptogena okutanii (strain HA).